The sequence spans 297 residues: MNLEGTHVAMITPFNNDNTINEEKYREFIDFLIEGGVDGILAAGTTGESATLTLEEHQKVIDIMVDQANGRVTTIAGAGSNATSEALDLVNYSKDAGADVALVITPYYNKPQQSGLYNHFKLLNDQCDMPIIAYNVPSRTGVDLSVDNIINLAKLDNIVAIKEANPDLNKLAHVFSRLNSENLLDDFTVLSGNDSLTLPMISQGSKGVISVVANIMPNKTSTMVNNALNGNYDEARTLSNELFNLMDVLFIEASPAPTKRALNLMGMDVGGLRMPINEICDENEVILKEILKENNLI.

Thr46 is a binding site for pyruvate. The active-site Proton donor/acceptor is Tyr134. Lys162 (schiff-base intermediate with substrate) is an active-site residue. Ile209 is a pyruvate binding site.

The protein belongs to the DapA family. Homotetramer; dimer of dimers.

Its subcellular location is the cytoplasm. The enzyme catalyses L-aspartate 4-semialdehyde + pyruvate = (2S,4S)-4-hydroxy-2,3,4,5-tetrahydrodipicolinate + H2O + H(+). It functions in the pathway amino-acid biosynthesis; L-lysine biosynthesis via DAP pathway; (S)-tetrahydrodipicolinate from L-aspartate: step 3/4. Functionally, catalyzes the condensation of (S)-aspartate-beta-semialdehyde [(S)-ASA] and pyruvate to 4-hydroxy-tetrahydrodipicolinate (HTPA). This Methanosphaera stadtmanae (strain ATCC 43021 / DSM 3091 / JCM 11832 / MCB-3) protein is 4-hydroxy-tetrahydrodipicolinate synthase.